We begin with the raw amino-acid sequence, 293 residues long: 33 kDa chaperonin (293 aa).

2 disulfides stabilise this stretch: cysteine 236–cysteine 238 and cysteine 269–cysteine 272.

It belongs to the HSP33 family. In terms of processing, under oxidizing conditions two disulfide bonds are formed involving the reactive cysteines. Under reducing conditions zinc is bound to the reactive cysteines and the protein is inactive.

It is found in the cytoplasm. In terms of biological role, redox regulated molecular chaperone. Protects both thermally unfolding and oxidatively damaged proteins from irreversible aggregation. Plays an important role in the bacterial defense system toward oxidative stress. This Lactobacillus delbrueckii subsp. bulgaricus (strain ATCC BAA-365 / Lb-18) protein is 33 kDa chaperonin.